The chain runs to 462 residues: ATP synthase subunit beta (462 aa).

151–158 (GGAGVGKT) contacts ATP.

The protein belongs to the ATPase alpha/beta chains family. In terms of assembly, F-type ATPases have 2 components, CF(1) - the catalytic core - and CF(0) - the membrane proton channel. CF(1) has five subunits: alpha(3), beta(3), gamma(1), delta(1), epsilon(1). CF(0) has three main subunits: a(1), b(2) and c(9-12). The alpha and beta chains form an alternating ring which encloses part of the gamma chain. CF(1) is attached to CF(0) by a central stalk formed by the gamma and epsilon chains, while a peripheral stalk is formed by the delta and b chains.

Its subcellular location is the cell inner membrane. The catalysed reaction is ATP + H2O + 4 H(+)(in) = ADP + phosphate + 5 H(+)(out). Functionally, produces ATP from ADP in the presence of a proton gradient across the membrane. The catalytic sites are hosted primarily by the beta subunits. This chain is ATP synthase subunit beta, found in Chlorobium limicola.